Reading from the N-terminus, the 614-residue chain is MSSTKQWDISKALAVATLFHFFHNVGKFCLMPFLTLYFRQLGLGASLVGIIIGFKHAVHLLWAPLCSFLAKSHRKRRFFIMASLLLSAGAGGLFAFYPPLDKNIVSLFCNTSMPWKEQLNPPIDISVFVDENISTTYATPTNHQTTNGEFNTFPSSVAEVAIDTTMASSLDMKTTTHQRFTDQFPSSSPLTRNKRLEHQTRKVLGSGKAQKANSSKSSASNSKQRSSLNNQTAPFATHPNVSHRPSIHERKVRDISIDFTDSFLDPKHKIFLIVLAMVIIWEILAAPLEWIADDSLYEYLDFVDATDRHGKLWIWGYLGASMGSIFITFLIDNLNCFVIFDIPRVSFHFFCYGGFLISTFFLSTLYPVHVSKKTEHSNKTVKALGFLGSDGRIVLTALTVFVLGAVGSTIQNFLFWQMQDIGSNELYMGLSIAAGLLSELALYFFRNKLLKTLTFKWMVVLGLLSLGIQFLYYSFLWTPWSVVAIQILNAFSSGVIWWAINSQVVDVASPGTERSLQLTLRWLAYGCGSSAGSFASGFIISRFSLAVLYQACCITLLTWIVIFLLVQPKLPNIKKINYSRLLAADNSDMSDSDEEQDRDWLVTAMKDENSNRKW.

The next 2 membrane-spanning stretches (helical) occupy residues 41-61 (LGLGASLVGIIIGFKHAVHLL) and 78-98 (FFIMASLLLSAGAGGLFAFYP). A compositionally biased stretch (polar residues) spans 177–191 (HQRFTDQFPSSSPLT). Residues 177 to 243 (HQRFTDQFPS…PFATHPNVSH (67 aa)) form a disordered region. Low complexity predominate over residues 205–227 (GSGKAQKANSSKSSASNSKQRSS). The next 9 membrane-spanning stretches (helical) occupy residues 270–290 (IFLIVLAMVIIWEILAAPLEW), 312–332 (LWIWGYLGASMGSIFITFLID), 345–365 (VSFHFFCYGGFLISTFFLSTL), 393–413 (IVLTALTVFVLGAVGSTIQNF), 425–445 (ELYMGLSIAAGLLSELALYFF), 457–477 (WMVVLGLLSLGIQFLYYSFLW), 480–500 (WSVVAIQILNAFSSGVIWWAI), 520–540 (LRWLAYGCGSSAGSFASGFII), and 546–566 (AVLYQACCITLLTWIVIFLLV).

Belongs to the major facilitator superfamily. MFSD6 family.

The protein localises to the membrane. The sequence is that of Major facilitator superfamily domain-containing protein 6-like protein B (mfsd6l-b) from Xenopus laevis (African clawed frog).